The chain runs to 200 residues: Superoxide dismutase [Mn] (200 aa).

Residues His-27, His-77, Asp-160, and His-164 each coordinate Mn(2+).

Belongs to the iron/manganese superoxide dismutase family. As to quaternary structure, homodimer. The cofactor is Mn(2+).

The catalysed reaction is 2 superoxide + 2 H(+) = H2O2 + O2. Its function is as follows. Destroys superoxide anion radicals which are normally produced within the cells and which are toxic to biological systems. The protein is Superoxide dismutase [Mn] (sodB) of Rhizobium meliloti (strain 1021) (Ensifer meliloti).